Here is a 440-residue protein sequence, read N- to C-terminus: Trigger factor (440 aa).

Residues Gly-163–Pro-248 enclose the PPIase FKBP-type domain.

It belongs to the FKBP-type PPIase family. Tig subfamily.

The protein localises to the cytoplasm. It carries out the reaction [protein]-peptidylproline (omega=180) = [protein]-peptidylproline (omega=0). Functionally, involved in protein export. Acts as a chaperone by maintaining the newly synthesized protein in an open conformation. Functions as a peptidyl-prolyl cis-trans isomerase. The polypeptide is Trigger factor (Trichlorobacter lovleyi (strain ATCC BAA-1151 / DSM 17278 / SZ) (Geobacter lovleyi)).